The following is a 252-amino-acid chain: Phosphate import ATP-binding protein PstB 1 (252 aa).

Positions 6–247 (LQIRDLSVYY…PKRKETEDYI (242 aa)) constitute an ABC transporter domain. 38–45 (GPSGSGKS) is an ATP binding site.

This sequence belongs to the ABC transporter superfamily. Phosphate importer (TC 3.A.1.7) family. As to quaternary structure, the complex is composed of two ATP-binding proteins (PstB), two transmembrane proteins (PstC and PstA) and a solute-binding protein (PstS).

The protein resides in the cell membrane. It carries out the reaction phosphate(out) + ATP + H2O = ADP + 2 phosphate(in) + H(+). Part of the ABC transporter complex PstSACB involved in phosphate import. Responsible for energy coupling to the transport system. In Streptococcus pyogenes serotype M1, this protein is Phosphate import ATP-binding protein PstB 1.